A 24-amino-acid polypeptide reads, in one-letter code: uncharacterized protein (24 aa).

Over 1–3 (MKK) the chain is Cytoplasmic. A helical membrane pass occupies residues 4 to 24 (TTIIMMGVAIIVVLGTELGWW).

It is found in the cell inner membrane. This is an uncharacterized protein from Escherichia coli (strain K12).